The sequence spans 77 residues: Conotoxin ArMKLT2-0251 (77 aa).

The first 22 residues, 1–22 (MKLTCVLIVAVLILTACQLIAA), serve as a signal peptide directing secretion. The propeptide occupies 23–46 (DDSRDLKRFSRRKMRDGMLNTKNM). Gln-49 carries the post-translational modification Pyrrolidone carboxylic acid. 3 disulfides stabilise this stretch: Cys-50-Cys-65, Cys-57-Cys-68, and Cys-64-Cys-73.

This sequence belongs to the conotoxin O1 superfamily. As to expression, expressed by the venom duct.

It is found in the secreted. This chain is Conotoxin ArMKLT2-0251, found in Conus arenatus (Sand-dusted cone).